The following is a 78-amino-acid chain: Acyl carrier protein BQ2027_MB0103 (78 aa).

Residues 1 to 78 form the Carrier domain; sequence MRDRILAAVC…ELEAVCTEFG (78 aa). Serine 35 bears the O-(pantetheine 4'-phosphoryl)serine mark.

Belongs to the acyl carrier protein (ACP) family. Requires pantetheine 4'-phosphate as cofactor.

The protein operates within lipid metabolism; fatty acid metabolism. Acyl-carrier protein (ACP) involved in the biosynthesis of a unique class of isonitrile lipopeptides (INLPs) that seem to play a role in metal acquisition. Is the dedicated ACP for the loading of activated acyl groups catalyzed by FadD10. The chain is Acyl carrier protein BQ2027_MB0103 from Mycobacterium bovis (strain ATCC BAA-935 / AF2122/97).